A 320-amino-acid chain; its full sequence is Methylenetetrahydrofolate dehydrogenase [NAD(+)] (320 aa).

Cys-152 is an active-site residue. NAD(+) contacts are provided by residues Arg-187–Ser-188 and Asp-210–Ile-211.

This sequence belongs to the tetrahydrofolate dehydrogenase/cyclohydrolase family. As to quaternary structure, homodimer.

Its subcellular location is the cytoplasm. The protein resides in the nucleus. The enzyme catalyses (6R)-5,10-methylene-5,6,7,8-tetrahydrofolate + NAD(+) = (6R)-5,10-methenyltetrahydrofolate + NADH. It participates in one-carbon metabolism; tetrahydrofolate interconversion. Its function is as follows. Catalyzes oxidation of cytoplasmic one-carbon units for purine biosynthesis. The sequence is that of Methylenetetrahydrofolate dehydrogenase [NAD(+)] (mtd1) from Schizosaccharomyces pombe (strain 972 / ATCC 24843) (Fission yeast).